The following is a 456-amino-acid chain: Adenylosuccinate synthetase (456 aa).

GTP contacts are provided by residues Gly11–Gly17 and Gly39–Thr41. Asp12 serves as the catalytic Proton acceptor. Mg(2+) is bound by residues Asp12 and Gly39. IMP contacts are provided by residues Asp12–Lys15, Asn37–His40, Thr127, Arg141, Gln232, Thr247, and Arg328. His40 (proton donor) is an active-site residue. Thr324–Arg330 provides a ligand contact to substrate. GTP contacts are provided by residues Arg330, His356 to Asp358, and Gly441 to Gly443.

It belongs to the adenylosuccinate synthetase family. In terms of assembly, homodimer. It depends on Mg(2+) as a cofactor.

The protein resides in the cytoplasm. The catalysed reaction is IMP + L-aspartate + GTP = N(6)-(1,2-dicarboxyethyl)-AMP + GDP + phosphate + 2 H(+). Its pathway is purine metabolism; AMP biosynthesis via de novo pathway; AMP from IMP: step 1/2. Functionally, plays an important role in the de novo pathway of purine nucleotide biosynthesis. Catalyzes the first committed step in the biosynthesis of AMP from IMP. The polypeptide is Adenylosuccinate synthetase (Natronomonas pharaonis (strain ATCC 35678 / DSM 2160 / CIP 103997 / JCM 8858 / NBRC 14720 / NCIMB 2260 / Gabara) (Halobacterium pharaonis)).